Consider the following 81-residue polypeptide: Photosystem I iron-sulfur center (81 aa).

4Fe-4S ferredoxin-type domains follow at residues 2–31 (SHSV…MVPW) and 39–68 (IAAS…IRVY). [4Fe-4S] cluster contacts are provided by cysteine 11, cysteine 14, cysteine 17, cysteine 21, cysteine 48, cysteine 51, cysteine 54, and cysteine 58.

As to quaternary structure, the cyanobacterial PSI reaction center is composed of one copy each of PsaA,B,C,D,E,F,I,J,K,L,M and X, and forms trimeric complexes. [4Fe-4S] cluster serves as cofactor.

It is found in the cellular thylakoid membrane. It carries out the reaction reduced [plastocyanin] + hnu + oxidized [2Fe-2S]-[ferredoxin] = oxidized [plastocyanin] + reduced [2Fe-2S]-[ferredoxin]. Its function is as follows. Apoprotein for the two 4Fe-4S centers FA and FB of photosystem I (PSI); essential for photochemical activity. FB is the terminal electron acceptor of PSI, donating electrons to ferredoxin. The C-terminus interacts with PsaA/B/D and helps assemble the protein into the PSI complex. Required for binding of PsaD and PsaE to PSI. PSI is a plastocyanin/cytochrome c6-ferredoxin oxidoreductase, converting photonic excitation into a charge separation, which transfers an electron from the donor P700 chlorophyll pair to the spectroscopically characterized acceptors A0, A1, FX, FA and FB in turn. This Synechococcus elongatus (strain ATCC 33912 / PCC 7942 / FACHB-805) (Anacystis nidulans R2) protein is Photosystem I iron-sulfur center.